The following is a 242-amino-acid chain: UPF0309 protein BMEA_B0892 (242 aa).

An SIS domain is found at 30 to 214 (AADLIAAAAR…ARLVGEGDAP (185 aa)).

It belongs to the UPF0309 family.

The sequence is that of UPF0309 protein BMEA_B0892 from Brucella melitensis biotype 2 (strain ATCC 23457).